Here is a 367-residue protein sequence, read N- to C-terminus: UDP-N-acetylglucosamine--N-acetylmuramyl-(pentapeptide) pyrophosphoryl-undecaprenol N-acetylglucosamine transferase (367 aa).

UDP-N-acetyl-alpha-D-glucosamine contacts are provided by residues 15-17 (TGG), Asn127, Arg163, Ser191, Ile249, and Gln294.

The protein belongs to the glycosyltransferase 28 family. MurG subfamily.

It localises to the cell inner membrane. It carries out the reaction di-trans,octa-cis-undecaprenyl diphospho-N-acetyl-alpha-D-muramoyl-L-alanyl-D-glutamyl-meso-2,6-diaminopimeloyl-D-alanyl-D-alanine + UDP-N-acetyl-alpha-D-glucosamine = di-trans,octa-cis-undecaprenyl diphospho-[N-acetyl-alpha-D-glucosaminyl-(1-&gt;4)]-N-acetyl-alpha-D-muramoyl-L-alanyl-D-glutamyl-meso-2,6-diaminopimeloyl-D-alanyl-D-alanine + UDP + H(+). The protein operates within cell wall biogenesis; peptidoglycan biosynthesis. Cell wall formation. Catalyzes the transfer of a GlcNAc subunit on undecaprenyl-pyrophosphoryl-MurNAc-pentapeptide (lipid intermediate I) to form undecaprenyl-pyrophosphoryl-MurNAc-(pentapeptide)GlcNAc (lipid intermediate II). The sequence is that of UDP-N-acetylglucosamine--N-acetylmuramyl-(pentapeptide) pyrophosphoryl-undecaprenol N-acetylglucosamine transferase from Burkholderia pseudomallei (strain 1710b).